The primary structure comprises 72 residues: Translation initiation factor IF-1 (72 aa).

Positions 1-72 constitute an S1-like domain; that stretch reads MTKEDCIEMQ…SKGRIIFRSR (72 aa).

Belongs to the IF-1 family. In terms of assembly, component of the 30S ribosomal translation pre-initiation complex which assembles on the 30S ribosome in the order IF-2 and IF-3, IF-1 and N-formylmethionyl-tRNA(fMet); mRNA recruitment can occur at any time during PIC assembly.

It localises to the cytoplasm. Functionally, one of the essential components for the initiation of protein synthesis. Stabilizes the binding of IF-2 and IF-3 on the 30S subunit to which N-formylmethionyl-tRNA(fMet) subsequently binds. Helps modulate mRNA selection, yielding the 30S pre-initiation complex (PIC). Upon addition of the 50S ribosomal subunit IF-1, IF-2 and IF-3 are released leaving the mature 70S translation initiation complex. This chain is Translation initiation factor IF-1, found in Buchnera aphidicola subsp. Baizongia pistaciae (strain Bp).